Here is a 166-residue protein sequence, read N- to C-terminus: Sec-independent protein translocase protein TatB (166 aa).

A helical membrane pass occupies residues 1–21 (MIDIAFSKLAIIGVAALVFIG). Positions 85-146 (DSSLHSAWDE…SGQKSRVISG (62 aa)) are disordered.

The protein belongs to the TatB family. The Tat system comprises two distinct complexes: a TatABC complex, containing multiple copies of TatA, TatB and TatC subunits, and a separate TatA complex, containing only TatA subunits. Substrates initially bind to the TatABC complex, which probably triggers association of the separate TatA complex to form the active translocon.

It localises to the cell inner membrane. Its function is as follows. Part of the twin-arginine translocation (Tat) system that transports large folded proteins containing a characteristic twin-arginine motif in their signal peptide across membranes. Together with TatC, TatB is part of a receptor directly interacting with Tat signal peptides. TatB may form an oligomeric binding site that transiently accommodates folded Tat precursor proteins before their translocation. The sequence is that of Sec-independent protein translocase protein TatB from Herminiimonas arsenicoxydans.